The following is a 261-amino-acid chain: Acidic leucine-rich nuclear phosphoprotein 32 family member A (261 aa).

LRR repeat units lie at residues 16-37 (QITE…TDEY), 39-60 (ALES…PKLP), 61-83 (NLKK…TTSP), and 84-105 (KLQY…KPLE). The region spanning 118–156 (NDATQVDNYREKIFKMLPSLNFLDGFDCNDEEVQSDGDD) is the LRRCT domain. Composition is skewed to acidic residues over residues 145 to 185 (CNDE…EEAN) and 194 to 229 (YNDD…DGDA). Positions 145–261 (CNDEEVQSDG…VRGKKRKHDG (117 aa)) are disordered. Positions 238 to 252 (AKDKDGEKEADESQV) are enriched in basic and acidic residues.

Belongs to the ANP32 family. Phosphorylated on serine residues.

The protein resides in the nucleus. It is found in the cytoplasm. Its function is as follows. Implicated in a number of cellular processes, including proliferation, differentiation, caspase-dependent and caspase-independent apoptosis, suppression of transformation (tumor suppressor), inhibition of protein phosphatase 2A, regulation of mRNA trafficking and stability, and inhibition of acetyltransferases as part of the INHAT (inhibitor of histone acetyltransferases) complex. In Drosophila melanogaster (Fruit fly), this protein is Acidic leucine-rich nuclear phosphoprotein 32 family member A (Anp32a).